We begin with the raw amino-acid sequence, 545 residues long: Esterase-5C (545 aa).

Residues 1-19 (MLAARLIILLSFYWLSASA) form the signal peptide. A disulfide bridge connects residues Cys84 and Cys103. A glycan (N-linked (GlcNAc...) asparagine) is linked at Asn113. Ser207 functions as the Acyl-ester intermediate in the catalytic mechanism. A disulfide bridge links Cys259 with Cys271. An N-linked (GlcNAc...) asparagine glycan is attached at Asn421. His467 (charge relay system) is an active-site residue. N-linked (GlcNAc...) asparagine glycosylation occurs at Asn507. The cysteines at positions 515 and 536 are disulfide-linked.

It belongs to the type-B carboxylesterase/lipase family.

The protein localises to the secreted. The enzyme catalyses a carboxylic ester + H2O = an alcohol + a carboxylate + H(+). This Drosophila pseudoobscura pseudoobscura (Fruit fly) protein is Esterase-5C (Est-5C).